The following is a 2432-amino-acid chain: uncharacterized protein (2432 aa).

The protein belongs to the IIV-6 261R/396L/443R family.

This is an uncharacterized protein from Invertebrate iridescent virus 6 (IIV-6).